The primary structure comprises 290 residues: Short chain dehydrogenase andI (290 aa).

NADP(+)-binding residues include Ile-35, Asn-120, Arg-154, Tyr-186, Lys-190, Val-219, and Thr-221. The active-site Proton acceptor is Tyr-186. The active-site Lowers pKa of active site Tyr is Lys-190.

This sequence belongs to the short-chain dehydrogenases/reductases (SDR) family.

Its pathway is secondary metabolite biosynthesis; terpenoid biosynthesis. Functionally, short chain dehydrogenase; part of the gene cluster that mediates the biosynthesis of anditomin, a fungal meroterpenoid. The first step of the pathway is the synthesis of 3,5-dimethylorsellinic acid (DMOA) by the polyketide synthase andM. DMOA is then converted to the phthalide compound 5,7-dihydroxy-4,6-dimethylphthalide (DHDMP) by the cytochrome P450 monooxygenase andK, which is further prenylated by the prenyltransferase andD to yield farnesyl-DHDMP. Further epoxidation by the FAD-dependent monooxygenase andE leads to epoxyfarnesyl-DHDMP. The next step involves the terpene cyclase andB that converts epoxyfarnesyl-DHDMP into preandiloid A through opening of the epoxide ring followed by the cyclization of the farnesyl moiety. Preandiloid A is in turn oxidized at the C-3 hydroxyl group to yield preandiloid B by the dehydrogenase andC. The dioxygenase andA is solely responsible for the dehydrogenation of preandiloid B leading to the enone preandiloid C, as well as for the intriguing structural rearrangement to generate the bicyclo[2.2.2]octane core, transforming preandiloid C into andiconin. FAD-binding monooxygenase andJ then produces andilesin D which is reduced by dehydrogenase andI to yield andilesin A. Action of acetyltransferase andG followed by a spontaneous acetate elimination leads then to andilesin B, which is in turn substrate of the short chain dehydrogenase andH to yield andilesin C. Finally, the dioxygenase andF catalyzes the transformation of andilesin C to anditomin. The chain is Short chain dehydrogenase andI from Emericella variicolor (Aspergillus stellatus).